Reading from the N-terminus, the 396-residue chain is Putative protein IntB (396 aa).

The Core-binding (CB) domain maps to 71-151; it reads RTFKEVAIEW…RTTAIMRYAV (81 aa). The Tyr recombinase domain maps to 174 to 367; that stretch reads QHRPALELKR…EHLEERRLML (194 aa). Catalysis depends on residues Arg213, Lys252, His316, Arg319, and His343. Tyr353 (O-(3'-phospho-DNA)-tyrosine intermediate) is an active-site residue.

This sequence belongs to the 'phage' integrase family.

The protein is Putative protein IntB (intB) of Escherichia coli (strain K12).